Here is a 679-residue protein sequence, read N- to C-terminus: UvrABC system protein B (679 aa).

The 152-residue stretch at 25-176 (YGVNQGKQYQ…NVRESLRELV (152 aa)) folds into the Helicase ATP-binding domain. 38–45 (GATGTGKT) lines the ATP pocket. Positions 91–114 (YYDYYQPEAYVPVSDTYIAKTSSV) match the Beta-hairpin motif. The Helicase C-terminal domain maps to 429 to 591 (QIDDLLDEIR…IIPKPAGKKP (163 aa)). The UVR domain maps to 639–674 (PEIIDKLEGKMNLAAEELDFEQAAKLRDRIRQLRKK).

It belongs to the UvrB family. Forms a heterotetramer with UvrA during the search for lesions. Interacts with UvrC in an incision complex.

It localises to the cytoplasm. The UvrABC repair system catalyzes the recognition and processing of DNA lesions. A damage recognition complex composed of 2 UvrA and 2 UvrB subunits scans DNA for abnormalities. Upon binding of the UvrA(2)B(2) complex to a putative damaged site, the DNA wraps around one UvrB monomer. DNA wrap is dependent on ATP binding by UvrB and probably causes local melting of the DNA helix, facilitating insertion of UvrB beta-hairpin between the DNA strands. Then UvrB probes one DNA strand for the presence of a lesion. If a lesion is found the UvrA subunits dissociate and the UvrB-DNA preincision complex is formed. This complex is subsequently bound by UvrC and the second UvrB is released. If no lesion is found, the DNA wraps around the other UvrB subunit that will check the other stand for damage. This chain is UvrABC system protein B, found in Prochlorococcus marinus (strain MIT 9211).